We begin with the raw amino-acid sequence, 479 residues long: Envelope glycoprotein C homolog (479 aa).

The N-terminal stretch at 1–22 (MASLARAMLALLALYAAAIAAA) is a signal peptide. Residues 23 to 451 (PSTTTALDTT…SVSWPVVSSM (429 aa)) are Virion surface-facing. Residues 26 to 96 (TTALDTTPNG…RVHGDKATAH (71 aa)) are disordered. N-linked (GlcNAc...) asparagine; by host glycosylation is present at N40. A compositionally biased stretch (pro residues) spans 48–57 (PSPPPTPAPA). Positions 75-82 (SRRKPPRN) are HDB1. Residues 75–87 (SRRKPPRNNNRTR) are compositionally biased toward basic residues. Residue N84 is glycosylated (N-linked (GlcNAc...) asparagine; by host). The HDB2 stretch occupies residues 95–101 (AHGRKRI). C103 and C120 are joined by a disulfide. The interval 135–140 (YRRGRF) is HDB3. N-linked (GlcNAc...) asparagine; by host glycosylation is found at N169, N192, N220, N228, N285, and N302. 3 disulfides stabilise this stretch: C256-C326, C365-C418, and C369-C392. A helical transmembrane segment spans residues 452–472 (IVVIAGIGILAIVLVIMATCV). Residues 473–479 (YYRQAGP) lie on the Cytoplasmic side of the membrane.

The protein belongs to the herpesviridae glycoprotein C family. In terms of assembly, interacts with host complement component C3; this interaction inhibits host immune response by disregulating complement cascade.

It localises to the virion membrane. Its function is as follows. Essential for the initial attachment to heparan sulfate moieties of the host cell surface proteoglycans. Plays also a role in host immune evasion by inhibiting the host complement cascade activation. This chain is Envelope glycoprotein C homolog (gC), found in Suid herpesvirus 1 (strain Indiana-Funkhauser / Becker) (SuHV-1).